Here is a 385-residue protein sequence, read N- to C-terminus: Exopolygalacturonase rpg16 (385 aa).

The first 26 residues, Met1–Thr26, serve as a signal peptide directing secretion. Asn143, Asn161, Asn164, and Asn180 each carry an N-linked (GlcNAc...) asparagine glycan. Residues Ser165 to His195 form a PbH1 1 repeat. Catalysis depends on Asp210, which acts as the Proton donor. The cysteines at positions 212 and 229 are disulfide-linked. 2 N-linked (GlcNAc...) asparagine glycosylation sites follow: Asn218 and Asn226. 3 PbH1 repeats span residues Val219–Gly241, Val249–Thr270, and Val278–Thr299. The active site involves His233. N-linked (GlcNAc...) asparagine glycosylation is found at Asn256, Asn282, and Asn343. Cys344 and Cys350 are disulfide-bonded. One copy of the PbH1 5 repeat lies at Cys350–Gly376. 2 N-linked (GlcNAc...) asparagine glycosylation sites follow: Asn359 and Asn365.

This sequence belongs to the glycosyl hydrolase 28 family. In terms of processing, N-glycosylated.

It localises to the secreted. The enzyme catalyses [(1-&gt;4)-alpha-D-galacturonosyl](n) + H2O = alpha-D-galacturonate + [(1-&gt;4)-alpha-D-galacturonosyl](n-1). Functionally, specific in hydrolyzing the terminal glycosidic bond of polygalacturonic acid and oligogalacturonates. This chain is Exopolygalacturonase rpg16, found in Rhizopus delemar (strain RA 99-880 / ATCC MYA-4621 / FGSC 9543 / NRRL 43880) (Mucormycosis agent).